A 245-amino-acid polypeptide reads, in one-letter code: Probable transcriptional regulatory protein Aflv_0709 (245 aa).

The span at 1–14 (MAGHSKWKNIQRRK) shows a compositional bias: basic residues. Residues 1-21 (MAGHSKWKNIQRRKNAQDAKR) form a disordered region.

Belongs to the TACO1 family.

Its subcellular location is the cytoplasm. The chain is Probable transcriptional regulatory protein Aflv_0709 from Anoxybacillus flavithermus (strain DSM 21510 / WK1).